The sequence spans 70 residues: Melittin (70 aa).

An N-terminal signal peptide occupies residues 1–21; that stretch reads MKFLVNVALVFMVVYISFIYA. Positions 22–43 are cleaved as a propeptide — removed by a dipeptidylpeptidase; the sequence is APEPEPAPEAEAEADAEADPEA. Glycine 44 is modified (N-formylglycine; partial). The residue at position 69 (glutamine 69) is a Glutamine amide.

The protein belongs to the melittin family. Monomer (in solution and for integration into membranes), homotetramer (in solution and potentially as a toroidal pore in membranes), and potenially homomultimer (as a toroidal pore in membranes). In terms of tissue distribution, expressed by the venom gland.

It is found in the secreted. It localises to the target cell membrane. Its function is as follows. Main toxin of bee venom with strong hemolytic activity and antimicrobial activity. It has enhancing effects on bee venom phospholipase A2 activity. This amphipathic toxin binds to negatively charged membrane surface and forms pore by inserting into lipid bilayers inducing the leakage of ions and molecules and the enhancement of permeability that ultimately leads to cell lysis. It acts as a voltage-gated pore with higher selectivity for anions over cations. The ion conductance has been shown to be voltage-dependent. Self-association of melittin in membranes is promoted by high ionic strength, but not by the presence of negatively charged lipids. In vivo, intradermal injection into healthy human volunteers produce sharp pain sensation and an inflammatory response. It produces pain by activating primary nociceptor cells directly and indirectly due to its ability to activate plasma membrane phospholipase A2 and its pore-forming activity. The polypeptide is Melittin (MELT) (Polistes hebraeus (Paper wasp)).